The primary structure comprises 515 residues: 2,3-bisphosphoglycerate-independent phosphoglycerate mutase (515 aa).

Mn(2+)-binding residues include Asp-14 and Ser-64. Residue Ser-64 is the Phosphoserine intermediate of the active site. Substrate contacts are provided by residues His-125, 155–156 (RD), Arg-187, Arg-193, 263–266 (RADR), and Lys-337. Mn(2+) contacts are provided by Asp-404, His-408, Asp-445, His-446, and His-464.

It belongs to the BPG-independent phosphoglycerate mutase family. Monomer. Mn(2+) serves as cofactor.

It carries out the reaction (2R)-2-phosphoglycerate = (2R)-3-phosphoglycerate. The protein operates within carbohydrate degradation; glycolysis; pyruvate from D-glyceraldehyde 3-phosphate: step 3/5. In terms of biological role, catalyzes the interconversion of 2-phosphoglycerate and 3-phosphoglycerate. The protein is 2,3-bisphosphoglycerate-independent phosphoglycerate mutase of Yersinia pseudotuberculosis serotype I (strain IP32953).